The chain runs to 167 residues: Fimbrial adapter PapF (167 aa).

The N-terminal stretch at 1–18 (MIRLSLFISLLLTSVAVL) is a signal peptide.

Its subcellular location is the secreted. The protein localises to the fimbrium. Adapter that links the PapG adhesin to the distal end of the tip fibrillum. PapF is required for the correct presentation of the adhesin at the distal end of the tip fibrillum. Pili are polar filaments radiating from the surface of the bacterium to a length of 0.5-1.5 micrometers and numbering 100-300 per cell, and enable bacteria to colonize the epithelium of specific host organs. The chain is Fimbrial adapter PapF (papF) from Escherichia coli.